A 182-amino-acid chain; its full sequence is Ribosome hibernation promotion factor (182 aa).

This sequence belongs to the HPF/YfiA ribosome-associated protein family. Long HPF subfamily. As to quaternary structure, interacts with 100S ribosomes.

The protein resides in the cytoplasm. Functionally, required for dimerization of active 70S ribosomes into 100S ribosomes in stationary phase; 100S ribosomes are translationally inactive and sometimes present during exponential growth. The protein is Ribosome hibernation promotion factor of Streptococcus pyogenes serotype M6 (strain ATCC BAA-946 / MGAS10394).